Reading from the N-terminus, the 349-residue chain is tRNA uridine(34) hydroxylase (349 aa).

One can recognise a Rhodanese domain in the interval 146–240 (DDPDAVFIDM…YARKAREQGL (95 aa)). Cys-200 (cysteine persulfide intermediate) is an active-site residue. A compositionally biased stretch (basic and acidic residues) spans 314–328 (PEEEQRRRRAGRENG). The disordered stretch occupies residues 314 to 349 (PEEEQRRRRAGRENGNKIFNKSRGRLNTTLGIPDPE).

This sequence belongs to the TrhO family.

It carries out the reaction uridine(34) in tRNA + AH2 + O2 = 5-hydroxyuridine(34) in tRNA + A + H2O. Catalyzes oxygen-dependent 5-hydroxyuridine (ho5U) modification at position 34 in tRNAs. In Cronobacter sakazakii (strain ATCC BAA-894) (Enterobacter sakazakii), this protein is tRNA uridine(34) hydroxylase.